A 354-amino-acid chain; its full sequence is UDP-N-acetylglucosamine--N-acetylmuramyl-(pentapeptide) pyrophosphoryl-undecaprenol N-acetylglucosamine transferase (354 aa).

Residues 11-13 (TAG), Arg-164, Ser-194, and Gln-289 each bind UDP-N-acetyl-alpha-D-glucosamine.

The protein belongs to the glycosyltransferase 28 family. MurG subfamily.

The protein resides in the cell membrane. It carries out the reaction di-trans,octa-cis-undecaprenyl diphospho-N-acetyl-alpha-D-muramoyl-L-alanyl-D-glutamyl-meso-2,6-diaminopimeloyl-D-alanyl-D-alanine + UDP-N-acetyl-alpha-D-glucosamine = di-trans,octa-cis-undecaprenyl diphospho-[N-acetyl-alpha-D-glucosaminyl-(1-&gt;4)]-N-acetyl-alpha-D-muramoyl-L-alanyl-D-glutamyl-meso-2,6-diaminopimeloyl-D-alanyl-D-alanine + UDP + H(+). Its pathway is cell wall biogenesis; peptidoglycan biosynthesis. Functionally, cell wall formation. Catalyzes the transfer of a GlcNAc subunit on undecaprenyl-pyrophosphoryl-MurNAc-pentapeptide (lipid intermediate I) to form undecaprenyl-pyrophosphoryl-MurNAc-(pentapeptide)GlcNAc (lipid intermediate II). The protein is UDP-N-acetylglucosamine--N-acetylmuramyl-(pentapeptide) pyrophosphoryl-undecaprenol N-acetylglucosamine transferase of Clostridium botulinum (strain Loch Maree / Type A3).